A 972-amino-acid polypeptide reads, in one-letter code: 116 kDa U5 small nuclear ribonucleoprotein component (972 aa).

The segment at 1-53 (MDTDLYDEFGNYIGPELDSDDEDDELGRESKELDELEDDDDDDDMGDHDEDHP) is disordered. Composition is skewed to acidic residues over residues 17 to 26 (LDSDDEDDEL) and 34 to 48 (DELEDDDDDDDMGDH). The region spanning 127-409 (ELIRNVTLCG…GIHLTKEELK (283 aa)) is the tr-type G domain. GTP contacts are provided by residues 136 to 143 (GHLHHGKT), 204 to 208 (DTPGH), and 258 to 261 (NKID).

Belongs to the TRAFAC class translation factor GTPase superfamily. Classic translation factor GTPase family. EF-G/EF-2 subfamily. In terms of assembly, component of the U5 snRNP and the U4/U6-U5 tri-snRNP complex, a building block of the spliceosome. Component of the pre-catalytic, catalytic and post-catalytic spliceosome complexes. Component of the minor spliceosome, which splices U12-type introns.

The protein resides in the nucleus. Functionally, required for pre-mRNA splicing as component of the spliceosome, including pre-catalytic, catalytic and post-catalytic spliceosomal complexes. Component of the U5 snRNP and the U4/U6-U5 tri-snRNP complex, a building block of the spliceosome. As a component of the minor spliceosome, involved in the splicing of U12-type introns in pre-mRNAs. The protein is 116 kDa U5 small nuclear ribonucleoprotein component (EFTUD2) of Gallus gallus (Chicken).